The chain runs to 130 residues: Large ribosomal subunit protein bL12 (130 aa).

Belongs to the bacterial ribosomal protein bL12 family. In terms of assembly, homodimer. Part of the ribosomal stalk of the 50S ribosomal subunit. Forms a multimeric L10(L12)X complex, where L10 forms an elongated spine to which 2 to 4 L12 dimers bind in a sequential fashion. Binds GTP-bound translation factors.

Forms part of the ribosomal stalk which helps the ribosome interact with GTP-bound translation factors. Is thus essential for accurate translation. This Chlamydia trachomatis serovar L2 (strain ATCC VR-902B / DSM 19102 / 434/Bu) protein is Large ribosomal subunit protein bL12.